The chain runs to 169 residues: Putative phosphoesterase BLi01284/BL02661 (169 aa).

Residue His-34 is the Proton donor of the active site. Short sequence motifs (HXTX) lie at residues 34–37 and 115–118; these read HLTL and HVTV. His-115 functions as the Proton acceptor in the catalytic mechanism.

This sequence belongs to the 2H phosphoesterase superfamily. YjcG family.

In Bacillus licheniformis (strain ATCC 14580 / DSM 13 / JCM 2505 / CCUG 7422 / NBRC 12200 / NCIMB 9375 / NCTC 10341 / NRRL NRS-1264 / Gibson 46), this protein is Putative phosphoesterase BLi01284/BL02661.